The chain runs to 395 residues: MAKEVYDRSKPHVNIGTIGHVDHGKTTLSAAISKVLSDKGYSKATDFASIDAAPEERERGITINTAHIEYETEKRHYAHIDAPGHADYVKNMITGAAQMDGAILVVAATDGPMPQTREHILLSRQVGVKYLIVFLNKADLVDDEELMELVEMEVRDLLSEYDFPGDDIPVIAGSALGALNGEPQWVAKVEELMDIVDEYIPTPERDTDKPLLLPVEDVFSITGRGTVASGRIERGTVKVGDEVEIVGIKEETKKAVVTGIEMFRKTLTEGLAGDNVGALLRGIQRDEIERGQVIAKPGSITPHKLFEGEVYVLSKEEGGRHTPFFDNYRPQFYFHTTDVTGSVKLPEGTEMVMPGDNVHIDVELIHPVAIEQGTTFSIREGGRTVGSGIVAEIKA.

One can recognise a tr-type G domain in the interval 10-204; that stretch reads KPHVNIGTIG…IVDEYIPTPE (195 aa). The interval 19 to 26 is G1; sequence GHVDHGKT. 19–26 is a binding site for GTP; it reads GHVDHGKT. Threonine 26 serves as a coordination point for Mg(2+). The segment at 60 to 64 is G2; it reads GITIN. The interval 81 to 84 is G3; that stretch reads DAPG. GTP is bound by residues 81–85 and 136–139; these read DAPGH and NKAD. The G4 stretch occupies residues 136–139; it reads NKAD. The G5 stretch occupies residues 174–176; it reads SAL.

Belongs to the TRAFAC class translation factor GTPase superfamily. Classic translation factor GTPase family. EF-Tu/EF-1A subfamily. In terms of assembly, monomer.

The protein localises to the cytoplasm. The enzyme catalyses GTP + H2O = GDP + phosphate + H(+). In terms of biological role, GTP hydrolase that promotes the GTP-dependent binding of aminoacyl-tRNA to the A-site of ribosomes during protein biosynthesis. This Lactococcus lactis subsp. lactis (strain IL1403) (Streptococcus lactis) protein is Elongation factor Tu.